The chain runs to 310 residues: tRNA dimethylallyltransferase (310 aa).

14–21 (GPTASGKS) contributes to the ATP binding site. 16–21 (TASGKS) contributes to the substrate binding site. 2 interaction with substrate tRNA regions span residues 39–42 (DSMQ) and 163–167 (QRIVR).

This sequence belongs to the IPP transferase family. Monomer. It depends on Mg(2+) as a cofactor.

It carries out the reaction adenosine(37) in tRNA + dimethylallyl diphosphate = N(6)-dimethylallyladenosine(37) in tRNA + diphosphate. Functionally, catalyzes the transfer of a dimethylallyl group onto the adenine at position 37 in tRNAs that read codons beginning with uridine, leading to the formation of N6-(dimethylallyl)adenosine (i(6)A). This Brucella abortus (strain S19) protein is tRNA dimethylallyltransferase.